The sequence spans 238 residues: ATP-dependent dethiobiotin synthetase BioD (238 aa).

Residue 12–17 (GVGKTV) participates in ATP binding. Thr16 is a Mg(2+) binding site. Lys37 is an active-site residue. Thr41 provides a ligand contact to substrate. Residues Asp50, 109-112 (EGAG), 170-171 (GS), and 200-202 (PAG) each bind ATP. The Mg(2+) site is built by Asp50 and Glu109.

Belongs to the dethiobiotin synthetase family. Homodimer. The cofactor is Mg(2+).

Its subcellular location is the cytoplasm. The catalysed reaction is (7R,8S)-7,8-diammoniononanoate + CO2 + ATP = (4R,5S)-dethiobiotin + ADP + phosphate + 3 H(+). The protein operates within cofactor biosynthesis; biotin biosynthesis; biotin from 7,8-diaminononanoate: step 1/2. Its function is as follows. Catalyzes a mechanistically unusual reaction, the ATP-dependent insertion of CO2 between the N7 and N8 nitrogen atoms of 7,8-diaminopelargonic acid (DAPA, also called 7,8-diammoniononanoate) to form a ureido ring. The polypeptide is ATP-dependent dethiobiotin synthetase BioD (Frankia casuarinae (strain DSM 45818 / CECT 9043 / HFP020203 / CcI3)).